The chain runs to 282 residues: Bis(5'-nucleosyl)-tetraphosphatase, symmetrical (282 aa).

This sequence belongs to the Ap4A hydrolase family.

The enzyme catalyses P(1),P(4)-bis(5'-adenosyl) tetraphosphate + H2O = 2 ADP + 2 H(+). In terms of biological role, hydrolyzes diadenosine 5',5'''-P1,P4-tetraphosphate to yield ADP. The sequence is that of Bis(5'-nucleosyl)-tetraphosphatase, symmetrical from Escherichia coli O127:H6 (strain E2348/69 / EPEC).